Consider the following 81-residue polypeptide: ATP synthase subunit c, chloroplastic (81 aa).

Helical transmembrane passes span 3 to 23 (PLVF…ASIG) and 57 to 77 (LAFM…LLFA).

Belongs to the ATPase C chain family. In terms of assembly, F-type ATPases have 2 components, F(1) - the catalytic core - and F(0) - the membrane proton channel. F(1) has five subunits: alpha(3), beta(3), gamma(1), delta(1), epsilon(1). F(0) has four main subunits: a(1), b(1), b'(1) and c(10-14). The alpha and beta chains form an alternating ring which encloses part of the gamma chain. F(1) is attached to F(0) by a central stalk formed by the gamma and epsilon chains, while a peripheral stalk is formed by the delta, b and b' chains.

The protein localises to the plastid. The protein resides in the chloroplast thylakoid membrane. Its function is as follows. F(1)F(0) ATP synthase produces ATP from ADP in the presence of a proton or sodium gradient. F-type ATPases consist of two structural domains, F(1) containing the extramembraneous catalytic core and F(0) containing the membrane proton channel, linked together by a central stalk and a peripheral stalk. During catalysis, ATP synthesis in the catalytic domain of F(1) is coupled via a rotary mechanism of the central stalk subunits to proton translocation. Functionally, key component of the F(0) channel; it plays a direct role in translocation across the membrane. A homomeric c-ring of between 10-14 subunits forms the central stalk rotor element with the F(1) delta and epsilon subunits. In Atropa belladonna (Belladonna), this protein is ATP synthase subunit c, chloroplastic.